The following is a 309-amino-acid chain: NAD kinase (309 aa).

The Proton acceptor role is filled by D89. NAD(+) is bound by residues 89 to 90 (DG), 163 to 164 (NE), H174, R191, D193, and 204 to 209 (TAYSLS).

It belongs to the NAD kinase family. The cofactor is a divalent metal cation.

The protein localises to the cytoplasm. It carries out the reaction NAD(+) + ATP = ADP + NADP(+) + H(+). Involved in the regulation of the intracellular balance of NAD and NADP, and is a key enzyme in the biosynthesis of NADP. Catalyzes specifically the phosphorylation on 2'-hydroxyl of the adenosine moiety of NAD to yield NADP. This chain is NAD kinase, found in Shewanella frigidimarina (strain NCIMB 400).